We begin with the raw amino-acid sequence, 453 residues long: tRNA modification GTPase MnmE (453 aa).

(6S)-5-formyl-5,6,7,8-tetrahydrofolate is bound by residues R22, E79, and K119. Residues 215 to 376 (GMKVVIAGRP…LKQHLKSLMG (162 aa)) form the TrmE-type G domain. K(+) is bound at residue N225. GTP is bound by residues 225–230 (NAGKSS), 244–250 (TEIAGTT), 269–272 (DTAG), and 334–337 (NKAD). Residue S229 coordinates Mg(2+). T244, I246, and T249 together coordinate K(+). T250 is a Mg(2+) binding site. Position 453 (K453) interacts with (6S)-5-formyl-5,6,7,8-tetrahydrofolate.

This sequence belongs to the TRAFAC class TrmE-Era-EngA-EngB-Septin-like GTPase superfamily. TrmE GTPase family. Homodimer. Heterotetramer of two MnmE and two MnmG subunits. It depends on K(+) as a cofactor.

The protein localises to the cytoplasm. Its function is as follows. Exhibits a very high intrinsic GTPase hydrolysis rate. Involved in the addition of a carboxymethylaminomethyl (cmnm) group at the wobble position (U34) of certain tRNAs, forming tRNA-cmnm(5)s(2)U34. This chain is tRNA modification GTPase MnmE, found in Shewanella pealeana (strain ATCC 700345 / ANG-SQ1).